A 634-amino-acid chain; its full sequence is Kelch-like protein 22 (634 aa).

Residue Ala2 is modified to N-acetylalanine. In terms of domain architecture, BTB spans 50–117 (FDVVLVVEGR…IYTSELELSL (68 aa)). Kelch repeat units lie at residues 299–349 (CVVG…VLNN), 350–399 (FVYL…VVGK), 400–446 (YIYA…TLQG), 448–493 (MYIT…ALLD), 494–544 (KLFV…VLDN), and 545–593 (RIYV…VLTL). A Phosphothreonine modification is found at Thr463. At Tyr466 the chain carries Phosphotyrosine. At Thr475 the chain carries Phosphothreonine. Residues 600-634 (EQPRGTPNRSQADADFASEVMSVSDWEEFDNSSED) form a disordered region. Thr605 bears the Phosphothreonine mark. Positions 624 to 634 (DWEEFDNSSED) are enriched in acidic residues.

As to quaternary structure, component of the BCR(KLHL22) E3 ubiquitin ligase complex, at least composed of CUL3, KLHL22 and RBX1. Interacts with PLK1. Interacts with DEPDC5 (via DEP domain); the interaction depends on amino acid availability. Interacts with YWHAE; required for the nuclear localization of KLHL22 upon amino acid starvation.

It is found in the cytoplasm. The protein resides in the cytosol. The protein localises to the cytoskeleton. Its subcellular location is the microtubule organizing center. It localises to the centrosome. It is found in the spindle. The protein resides in the nucleus. The protein localises to the lysosome. It functions in the pathway protein modification; protein ubiquitination. Substrate-specific adapter of a BCR (BTB-CUL3-RBX1) E3 ubiquitin ligase complex required for chromosome alignment and localization of PLK1 at kinetochores. The BCR(KLHL22) ubiquitin ligase complex mediates monoubiquitination of PLK1, leading to PLK1 dissociation from phosphoreceptor proteins and subsequent removal from kinetochores, allowing silencing of the spindle assembly checkpoint (SAC) and chromosome segregation. Monoubiquitination of PLK1 does not lead to PLK1 degradation. The BCR(KLHL22) ubiquitin ligase complex is also responsible for the amino acid-stimulated 'Lys-48' polyubiquitination and proteasomal degradation of DEPDC5. Through the degradation of DEPDC5, releases the GATOR1 complex-mediated inhibition of the TORC1 pathway. It is therefore an amino acid-dependent activator within the amino acid-sensing branch of the TORC1 pathway, indirectly regulating different cellular processes including cell growth and autophagy. The chain is Kelch-like protein 22 from Rattus norvegicus (Rat).